A 60-amino-acid polypeptide reads, in one-letter code: Conotoxin Cal6.30 (60 aa).

An N-terminal signal peptide occupies residues 1–22 (MKVTCVLTLAVLILTIGQIANA). 3 cysteine pairs are disulfide-bonded: C31–C47, C38–C51, and C46–C55.

As to expression, expressed by the venom duct.

The protein localises to the secreted. Probable neurotoxin. In Californiconus californicus (California cone), this protein is Conotoxin Cal6.30.